Consider the following 692-residue polypeptide: Elongation factor G (692 aa).

The region spanning 8–282 (ENTRNIGIMA…GVVDYLPSPV (275 aa)) is the tr-type G domain. GTP is bound by residues 17-24 (AHIDAGKT), 81-85 (DTPGH), and 135-138 (NKMD).

The protein belongs to the TRAFAC class translation factor GTPase superfamily. Classic translation factor GTPase family. EF-G/EF-2 subfamily.

The protein resides in the cytoplasm. Functionally, catalyzes the GTP-dependent ribosomal translocation step during translation elongation. During this step, the ribosome changes from the pre-translocational (PRE) to the post-translocational (POST) state as the newly formed A-site-bound peptidyl-tRNA and P-site-bound deacylated tRNA move to the P and E sites, respectively. Catalyzes the coordinated movement of the two tRNA molecules, the mRNA and conformational changes in the ribosome. In Geobacillus sp. (strain WCH70), this protein is Elongation factor G.